The chain runs to 135 residues: Early nodulin-5 (135 aa).

The N-terminal stretch at 1–23 is a signal peptide; it reads MASSSSPIFLMIIFSMWLLFSYS.

In terms of tissue distribution, invasion zone and early symbiotic zone.

Involved in the infection process during the plant-rhizobium interaction. This is Early nodulin-5 (ENOD5) from Pisum sativum (Garden pea).